The following is a 616-amino-acid chain: MPQLRSRTVTHGRNMAGARALMRASGVASADIGKPIIAVANSFTEFVPGHTHLAPVGRIVSEAIQAAGAVPREFNTIAVDDGIAMGHGGMLYSLPSRDLIADSVEYMVEAHCADALICISNCDKITPGMLMAAMRLNIPTVFVSGGPMEAGKATLVDGTVRKLDLVNAISDAVDESISDEDILRIEENACPTCGSCSGMFTANSMNCLTEVLGLSLPGNGSVLATHTARKALYEDAGRTVVEITKRYYEQDDETVLPRSIGTRAAFDNAMALDIAMGGSTNTILHLLAAAEEAELAYDLDDINEVSRRVPCLSKVAPNVAPGGTYYMEDVHRAGGIPALLGELHRGGLLNEDVHSVHSDTLAEWLKNWDVRGGSPSPEAIELWHAAPGCVRSATAFSQSERWDTLDLDAAGGCIRDVEHAYSKDGGLAVLKGNLAVDGCVVKTAGVDESIWTFEGPAVVCESQDEAVDKILRKEIEPGDVVVIRYEGPRGGPGMQEMLYPTSFLKGRGLGKVCALVTDGRFSGGTSGLSIGHASPEAASGGTIALVEDGDRIRIDIPNRSIELLVDDAELATRREALNGVYAPKNRDRKVSAALRAYAAMATSADRGAVRDVSKLG.

A Mg(2+)-binding site is contributed by D81. C122 contributes to the [2Fe-2S] cluster binding site. D123 and K124 together coordinate Mg(2+). K124 is subject to N6-carboxylysine. C196 provides a ligand contact to [2Fe-2S] cluster. E496 contacts Mg(2+). Residue S522 is the Proton acceptor of the active site.

The protein belongs to the IlvD/Edd family. As to quaternary structure, homodimer. [2Fe-2S] cluster serves as cofactor. It depends on Mg(2+) as a cofactor.

The enzyme catalyses (2R)-2,3-dihydroxy-3-methylbutanoate = 3-methyl-2-oxobutanoate + H2O. It catalyses the reaction (2R,3R)-2,3-dihydroxy-3-methylpentanoate = (S)-3-methyl-2-oxopentanoate + H2O. It participates in amino-acid biosynthesis; L-isoleucine biosynthesis; L-isoleucine from 2-oxobutanoate: step 3/4. Its pathway is amino-acid biosynthesis; L-valine biosynthesis; L-valine from pyruvate: step 3/4. Its function is as follows. Functions in the biosynthesis of branched-chain amino acids. Catalyzes the dehydration of (2R,3R)-2,3-dihydroxy-3-methylpentanoate (2,3-dihydroxy-3-methylvalerate) into 2-oxo-3-methylpentanoate (2-oxo-3-methylvalerate) and of (2R)-2,3-dihydroxy-3-methylbutanoate (2,3-dihydroxyisovalerate) into 2-oxo-3-methylbutanoate (2-oxoisovalerate), the penultimate precursor to L-isoleucine and L-valine, respectively. The polypeptide is Dihydroxy-acid dehydratase (Streptomyces griseus subsp. griseus (strain JCM 4626 / CBS 651.72 / NBRC 13350 / KCC S-0626 / ISP 5235)).